Reading from the N-terminus, the 711-residue chain is Protein Smaug homolog 1 (711 aa).

Ser168 is modified (phosphoserine). The interval 278 to 323 is disordered; the sequence is ARGPQCLPSDHAPLSPQSSVASSGSGGSEHLEDQTTARNTFQEEGS. One can recognise an SAM domain in the interval 323-396; that stretch reads SGMKDVPAWL…LKSLERDIIE (74 aa). Ser420 is subject to Phosphoserine. Disordered regions lie at residues 422–448 and 565–588; these read STTPEVRCREPSLMESPSPDCKDSAAA and NRGFGQSNSLPTASSVGSGMGRRN. At Thr424 the chain carries Phosphothreonine. An Omega-N-methylarginine modification is found at Arg566. Polar residues predominate over residues 568–581; the sequence is FGQSNSLPTASSVG. Ser573 carries the post-translational modification Phosphoserine.

This sequence belongs to the SMAUG family. As to expression, expressed in brain (at protein level).

It localises to the cytoplasm. The protein localises to the cell projection. The protein resides in the dendrite. It is found in the synapse. Its subcellular location is the synaptosome. Its function is as follows. Acts as a translational repressor of SRE-containing messengers. This chain is Protein Smaug homolog 1 (Samd4a), found in Mus musculus (Mouse).